Consider the following 20-residue polypeptide: Dermaseptin-N1 (20 aa).

Position 20 is a leucine amide (leucine 20).

In terms of tissue distribution, expressed by the skin glands.

Its subcellular location is the secreted. Its function is as follows. Antimicrobial peptide with moderate activity against both Gram-positive and Gram-negative bacteria, and important activity against Leishmania species (L.amazonensis and L.infantum). Acts on both Leishmania promastigote and amastigote forms. Shows activity against E.coli (MIC=17.8 uM), S.aureus (MIC=32.3 uM) and the phytopathogenic bacterium Xanthomonas axonopodis (MIC=2 uM). Shows low cytotoxicity against mammalian cells in models of peritoneal macrophages. The chain is Dermaseptin-N1 from Pithecopus nordestinus (Northeastern Brazilian leaf frog).